A 284-amino-acid chain; its full sequence is Short-chain dehydrogenase RED1 (284 aa).

NADP(+) is bound by residues I11, T37, D58, N86, Y151, K155, V184, and T186. Y151 functions as the Proton acceptor in the catalytic mechanism. Residue K155 is the Lowers pKa of active site Tyr of the active site.

This sequence belongs to the short-chain dehydrogenases/reductases (SDR) family.

Its pathway is polyketide biosynthesis. Short-chain dehydrogenase; part of the gene cluster that mediates the biosynthesis of pyriculol and pyriculariol, two heptaketides that induce lesion formation upon application on rice leaves but are dispensable for pathogenicity. The highly reducing polyketide synthase synthesizes the heptaketide backbone of pyriculol and pyriculariol. Pyriculol and pyriculariol contain several hydroxyl moieties and double bonds, so it can be assumed that several reduction steps occur during biosynthesis. These reactions could be executed by PKS19 itself or partly by the tailoring enzymes OXR1, OXR2, RED1, RED2 or RED3, identified within the cluster. The FAD-linked oxidoreductase OXR1 is the only tailoring enzyme for which the function has been determined yet, and is involved in the oxidation of dihydropyriculol and dihydropyriculariol into pyriculol and pyriculariol, respectively. This is Short-chain dehydrogenase RED1 from Pyricularia oryzae (strain 70-15 / ATCC MYA-4617 / FGSC 8958) (Rice blast fungus).